The sequence spans 213 residues: ATP phosphoribosyltransferase (213 aa).

Belongs to the ATP phosphoribosyltransferase family. Short subfamily. Heteromultimer composed of HisG and HisZ subunits.

Its subcellular location is the cytoplasm. The catalysed reaction is 1-(5-phospho-beta-D-ribosyl)-ATP + diphosphate = 5-phospho-alpha-D-ribose 1-diphosphate + ATP. The protein operates within amino-acid biosynthesis; L-histidine biosynthesis; L-histidine from 5-phospho-alpha-D-ribose 1-diphosphate: step 1/9. Functionally, catalyzes the condensation of ATP and 5-phosphoribose 1-diphosphate to form N'-(5'-phosphoribosyl)-ATP (PR-ATP). Has a crucial role in the pathway because the rate of histidine biosynthesis seems to be controlled primarily by regulation of HisG enzymatic activity. The polypeptide is ATP phosphoribosyltransferase (hisG) (Bacillus subtilis (strain 168)).